The sequence spans 273 residues: NADPH-dependent 7-cyano-7-deazaguanine reductase (273 aa).

81–83 (VES) contacts substrate. 83 to 84 (SK) lines the NADPH pocket. Residue C179 is the Thioimide intermediate of the active site. The active-site Proton donor is D186. Position 218–219 (218–219 (AE)) interacts with substrate. An NADPH-binding site is contributed by 247–248 (RG).

Belongs to the GTP cyclohydrolase I family. QueF type 2 subfamily. As to quaternary structure, homodimer.

The protein resides in the cytoplasm. It carries out the reaction 7-aminomethyl-7-carbaguanine + 2 NADP(+) = 7-cyano-7-deazaguanine + 2 NADPH + 3 H(+). The protein operates within tRNA modification; tRNA-queuosine biosynthesis. In terms of biological role, catalyzes the NADPH-dependent reduction of 7-cyano-7-deazaguanine (preQ0) to 7-aminomethyl-7-deazaguanine (preQ1). The chain is NADPH-dependent 7-cyano-7-deazaguanine reductase from Rickettsia felis (strain ATCC VR-1525 / URRWXCal2) (Rickettsia azadi).